The chain runs to 104 residues: Large ribosomal subunit protein eL30 (104 aa).

The protein belongs to the eukaryotic ribosomal protein eL30 family.

This Leishmania major protein is Large ribosomal subunit protein eL30 (RPL30).